We begin with the raw amino-acid sequence, 343 residues long: Proto-oncogene serine/threonine-protein kinase mos (343 aa).

Residues 63-339 (VCLMHRLGSG…LLQRDLKAFR (277 aa)) enclose the Protein kinase domain. Residues 69–77 (LGSGGFGSV) and Lys-90 contribute to the ATP site. Asp-198 functions as the Proton acceptor in the catalytic mechanism.

Belongs to the protein kinase superfamily. Ser/Thr protein kinase family. As to quaternary structure, interacts with MAP2K1/MEK1.

The protein resides in the cytoplasm. The enzyme catalyses L-seryl-[protein] + ATP = O-phospho-L-seryl-[protein] + ADP + H(+). It catalyses the reaction L-threonyl-[protein] + ATP = O-phospho-L-threonyl-[protein] + ADP + H(+). Functionally, serine/threonine kinase involved in the regulation of MAPK signaling. Is an activator of the ERK1/2 signaling cascade playing an essential role in the stimulation of oocyte maturation. This chain is Proto-oncogene serine/threonine-protein kinase mos, found in Mus musculus (Mouse).